Reading from the N-terminus, the 369-residue chain is MDLSIPNPVADTTKQVDGGSPAGGQPQEIDALIVGAGPVGLFQVFELGLLEIKAHVIDSLKVVGGQCVELYPDKPIYDIPAVPICTGQELTDNLLKQIEPFEPTFHLGQEVAVVERREDGRFFVETSLGTRFITKTIFIAAGVGSFQPRTLKVEGIDKFDGKQLFYRVKDPSRFHGRNLVIIGGGDSALDWTLDLVGKAESVVMIHRRDGFRAAPASVAKMKELCEQMEMQFLVGQVGGYEEKDGVLTEIKVTGADGVTRRLPVDDLLVFFGLSPKLGPIAEWGLDLERKQIKVDTEKFETNIPGIFAVGDINTYPGKKKLILSGFHEAALAAFGAAPYIFPEKKIHMQYTTTSPKLHKILGVDSPVFD.

Positions 1 to 23 are disordered; sequence MDLSIPNPVADTTKQVDGGSPAG. FAD-binding residues include D58, Q66, Y71, V111, F146, D311, and T352.

It belongs to the ferredoxin--NADP reductase type 2 family. Homodimer. The cofactor is FAD.

It carries out the reaction 2 reduced [2Fe-2S]-[ferredoxin] + NADP(+) + H(+) = 2 oxidized [2Fe-2S]-[ferredoxin] + NADPH. This Cupriavidus necator (strain ATCC 17699 / DSM 428 / KCTC 22496 / NCIMB 10442 / H16 / Stanier 337) (Ralstonia eutropha) protein is Ferredoxin--NADP reductase 2.